The primary structure comprises 629 residues: uncharacterized protein (629 aa).

Histidine 562 acts as the Proton acceptor in catalysis.

It belongs to the GMC oxidoreductase family. It depends on FAD as a cofactor.

This is an uncharacterized protein from Mycobacterium tuberculosis (strain CDC 1551 / Oshkosh).